Consider the following 469-residue polypeptide: Aspartyl/glutamyl-tRNA(Asn/Gln) amidotransferase subunit B (469 aa).

It belongs to the GatB/GatE family. GatB subfamily. Heterotrimer of A, B and C subunits.

It catalyses the reaction L-glutamyl-tRNA(Gln) + L-glutamine + ATP + H2O = L-glutaminyl-tRNA(Gln) + L-glutamate + ADP + phosphate + H(+). The catalysed reaction is L-aspartyl-tRNA(Asn) + L-glutamine + ATP + H2O = L-asparaginyl-tRNA(Asn) + L-glutamate + ADP + phosphate + 2 H(+). Its function is as follows. Allows the formation of correctly charged Asn-tRNA(Asn) or Gln-tRNA(Gln) through the transamidation of misacylated Asp-tRNA(Asn) or Glu-tRNA(Gln) in organisms which lack either or both of asparaginyl-tRNA or glutaminyl-tRNA synthetases. The reaction takes place in the presence of glutamine and ATP through an activated phospho-Asp-tRNA(Asn) or phospho-Glu-tRNA(Gln). In Methanococcus aeolicus (strain ATCC BAA-1280 / DSM 17508 / OCM 812 / Nankai-3), this protein is Aspartyl/glutamyl-tRNA(Asn/Gln) amidotransferase subunit B.